The following is a 728-amino-acid chain: LPS-assembly protein LptD (728 aa).

The first 21 residues, 1–21 (MSALPGFTLAALLLNVSLAEA), serve as a signal peptide directing secretion.

Belongs to the LptD family. In terms of assembly, component of the lipopolysaccharide transport and assembly complex. Interacts with LptE and LptA.

The protein localises to the cell outer membrane. Its function is as follows. Together with LptE, is involved in the assembly of lipopolysaccharide (LPS) at the surface of the outer membrane. The chain is LPS-assembly protein LptD from Thiobacillus denitrificans (strain ATCC 25259 / T1).